A 367-amino-acid polypeptide reads, in one-letter code: tRNA/tmRNA (uracil-C(5))-methyltransferase (367 aa).

Positions 190, 218, 223, 239, and 299 each coordinate S-adenosyl-L-methionine. The active-site Nucleophile is the Cys-324. Glu-358 serves as the catalytic Proton acceptor.

This sequence belongs to the class I-like SAM-binding methyltransferase superfamily. RNA M5U methyltransferase family. TrmA subfamily.

The catalysed reaction is uridine(54) in tRNA + S-adenosyl-L-methionine = 5-methyluridine(54) in tRNA + S-adenosyl-L-homocysteine + H(+). It catalyses the reaction uridine(341) in tmRNA + S-adenosyl-L-methionine = 5-methyluridine(341) in tmRNA + S-adenosyl-L-homocysteine + H(+). In terms of biological role, dual-specificity methyltransferase that catalyzes the formation of 5-methyluridine at position 54 (m5U54) in all tRNAs, and that of position 341 (m5U341) in tmRNA (transfer-mRNA). This chain is tRNA/tmRNA (uracil-C(5))-methyltransferase, found in Pectobacterium carotovorum subsp. carotovorum (strain PC1).